We begin with the raw amino-acid sequence, 365 residues long: DNA polymerase IV (365 aa).

Residues 7–188 (IIHIDMDAFY…LPVNKFFGVG (182 aa)) enclose the UmuC domain. Mg(2+)-binding residues include Asp-11 and Asp-106. Glu-107 is an active-site residue.

It belongs to the DNA polymerase type-Y family. Monomer. Mg(2+) is required as a cofactor.

It localises to the cytoplasm. It carries out the reaction DNA(n) + a 2'-deoxyribonucleoside 5'-triphosphate = DNA(n+1) + diphosphate. In terms of biological role, poorly processive, error-prone DNA polymerase involved in untargeted mutagenesis. Copies undamaged DNA at stalled replication forks, which arise in vivo from mismatched or misaligned primer ends. These misaligned primers can be extended by PolIV. Exhibits no 3'-5' exonuclease (proofreading) activity. May be involved in translesional synthesis, in conjunction with the beta clamp from PolIII. The polypeptide is DNA polymerase IV (Clostridioides difficile (strain 630) (Peptoclostridium difficile)).